A 690-amino-acid polypeptide reads, in one-letter code: Elongation factor G (690 aa).

The tr-type G domain maps to 8 to 282; the sequence is ERVRNIGIAA…AVIDYLPAPV (275 aa). GTP-binding positions include 17-24, 81-85, and 135-138; these read AHIDAGKT, DTPGH, and NKMD.

This sequence belongs to the TRAFAC class translation factor GTPase superfamily. Classic translation factor GTPase family. EF-G/EF-2 subfamily.

Its subcellular location is the cytoplasm. Functionally, catalyzes the GTP-dependent ribosomal translocation step during translation elongation. During this step, the ribosome changes from the pre-translocational (PRE) to the post-translocational (POST) state as the newly formed A-site-bound peptidyl-tRNA and P-site-bound deacylated tRNA move to the P and E sites, respectively. Catalyzes the coordinated movement of the two tRNA molecules, the mRNA and conformational changes in the ribosome. The chain is Elongation factor G from Parasynechococcus marenigrum (strain WH8102).